Reading from the N-terminus, the 424-residue chain is CinA-like protein (424 aa).

It belongs to the CinA family.

The sequence is that of CinA-like protein from Shewanella putrefaciens (strain CN-32 / ATCC BAA-453).